Here is a 126-residue protein sequence, read N- to C-terminus: Aspartate 1-decarboxylase (126 aa).

Ser25 serves as the catalytic Schiff-base intermediate with substrate; via pyruvic acid. Ser25 carries the pyruvic acid (Ser) modification. Thr57 contributes to the substrate binding site. The active-site Proton donor is the Tyr58. Residue 73 to 75 (GAA) participates in substrate binding.

It belongs to the PanD family. Heterooctamer of four alpha and four beta subunits. Requires pyruvate as cofactor. In terms of processing, is synthesized initially as an inactive proenzyme, which is activated by self-cleavage at a specific serine bond to produce a beta-subunit with a hydroxyl group at its C-terminus and an alpha-subunit with a pyruvoyl group at its N-terminus.

It is found in the cytoplasm. It catalyses the reaction L-aspartate + H(+) = beta-alanine + CO2. It functions in the pathway cofactor biosynthesis; (R)-pantothenate biosynthesis; beta-alanine from L-aspartate: step 1/1. In terms of biological role, catalyzes the pyruvoyl-dependent decarboxylation of aspartate to produce beta-alanine. The polypeptide is Aspartate 1-decarboxylase (Psychrobacter arcticus (strain DSM 17307 / VKM B-2377 / 273-4)).